An 82-amino-acid chain; its full sequence is uncharacterized protein (82 aa).

Belongs to the chlamydial CPn_0710/CT_666/TC_0037 family.

This is an uncharacterized protein from Chlamydia muridarum (strain MoPn / Nigg).